The primary structure comprises 397 residues: Transaldolase (397 aa).

Residue Lys-136 is the Schiff-base intermediate with substrate of the active site.

Belongs to the transaldolase family. Type 1 subfamily. As to quaternary structure, homodimer.

It localises to the cytoplasm. The enzyme catalyses D-sedoheptulose 7-phosphate + D-glyceraldehyde 3-phosphate = D-erythrose 4-phosphate + beta-D-fructose 6-phosphate. It functions in the pathway carbohydrate degradation; pentose phosphate pathway; D-glyceraldehyde 3-phosphate and beta-D-fructose 6-phosphate from D-ribose 5-phosphate and D-xylulose 5-phosphate (non-oxidative stage): step 2/3. Transaldolase is important for the balance of metabolites in the pentose-phosphate pathway. The chain is Transaldolase from Synechococcus sp. (strain ATCC 27144 / PCC 6301 / SAUG 1402/1) (Anacystis nidulans).